Reading from the N-terminus, the 123-residue chain is NADH-quinone oxidoreductase subunit A (123 aa).

A run of 3 helical transmembrane segments spans residues 11–31, 67–87, and 92–112; these read FPVLMFLLVGTGLGVALVSIG, LVAILFIIFDLETAFLFPWGV, and IGWPGFISMMIFLLEFLLGFA.

The protein belongs to the complex I subunit 3 family. In terms of assembly, NDH-1 is composed of 14 different subunits. Subunits NuoA, H, J, K, L, M, N constitute the membrane sector of the complex.

Its subcellular location is the cell inner membrane. The catalysed reaction is a quinone + NADH + 5 H(+)(in) = a quinol + NAD(+) + 4 H(+)(out). In terms of biological role, NDH-1 shuttles electrons from NADH, via FMN and iron-sulfur (Fe-S) centers, to quinones in the respiratory chain. The immediate electron acceptor for the enzyme in this species is believed to be ubiquinone. Couples the redox reaction to proton translocation (for every two electrons transferred, four hydrogen ions are translocated across the cytoplasmic membrane), and thus conserves the redox energy in a proton gradient. The polypeptide is NADH-quinone oxidoreductase subunit A (Paraburkholderia phymatum (strain DSM 17167 / CIP 108236 / LMG 21445 / STM815) (Burkholderia phymatum)).